A 217-amino-acid chain; its full sequence is Protein canopy 4 (217 aa).

Positions 1-27 (MEMFTVFLFYMFSLVLANQEERLPNKC) are cleaved as a signal peptide. 3 disulfide bridges follow: Cys-27/Cys-185, Cys-30/Cys-173, and Cys-83/Cys-145. Residues 194–217 (MGMKGSEEESEGKDGKETHDAGEL) are disordered. The span at 205–217 (GKDGKETHDAGEL) shows a compositional bias: basic and acidic residues.

This sequence belongs to the canopy family.

Its subcellular location is the secreted. This is Protein canopy 4 (cnpy4) from Danio rerio (Zebrafish).